The sequence spans 497 residues: Putative diacyglycerol O-acyltransferase MT3584 (497 aa).

Residue His-143 is the Proton acceptor of the active site.

The protein belongs to the long-chain O-acyltransferase family.

The catalysed reaction is an acyl-CoA + a 1,2-diacyl-sn-glycerol = a triacyl-sn-glycerol + CoA. The protein operates within glycerolipid metabolism; triacylglycerol biosynthesis. This chain is Putative diacyglycerol O-acyltransferase MT3584, found in Mycobacterium tuberculosis (strain CDC 1551 / Oshkosh).